Consider the following 471-residue polypeptide: Methylenetetrahydrofolate--tRNA-(uracil-5-)-methyltransferase TrmFO (471 aa).

Residue 13 to 18 coordinates FAD; that stretch reads GGGLAG.

This sequence belongs to the MnmG family. TrmFO subfamily. Requires FAD as cofactor.

Its subcellular location is the cytoplasm. It carries out the reaction uridine(54) in tRNA + (6R)-5,10-methylene-5,6,7,8-tetrahydrofolate + NADH + H(+) = 5-methyluridine(54) in tRNA + (6S)-5,6,7,8-tetrahydrofolate + NAD(+). The enzyme catalyses uridine(54) in tRNA + (6R)-5,10-methylene-5,6,7,8-tetrahydrofolate + NADPH + H(+) = 5-methyluridine(54) in tRNA + (6S)-5,6,7,8-tetrahydrofolate + NADP(+). Catalyzes the folate-dependent formation of 5-methyl-uridine at position 54 (M-5-U54) in all tRNAs. The polypeptide is Methylenetetrahydrofolate--tRNA-(uracil-5-)-methyltransferase TrmFO (Azorhizobium caulinodans (strain ATCC 43989 / DSM 5975 / JCM 20966 / LMG 6465 / NBRC 14845 / NCIMB 13405 / ORS 571)).